The sequence spans 468 residues: Cytochrome bd ubiquinol oxidase subunit 1 (468 aa).

The next 9 helical transmembrane spans lie at 15–35 (TLFH…VALM), 51–71 (AKFW…TGIL), 95–115 (LAIE…LWIF), 124–144 (IHAL…FWIL), 177–197 (LWVE…FFIA), 219–239 (LAMI…HMQA), 331–351 (FRIM…GLWL), 366–386 (IMIA…IMTE), and 416–436 (SIIA…FLFI). H18 lines the heme b pocket. H183 provides a ligand contact to heme b. M334 is a heme b binding site. The interval 448-468 (HHDVPVSTDPFSQEVYHGISS) is disordered.

It belongs to the cytochrome ubiquinol oxidase subunit 1 family. As to quaternary structure, heterodimer of subunits I and II. It depends on heme b as a cofactor. Heme d cis-diol serves as cofactor.

It is found in the cell membrane. The enzyme catalyses 2 a ubiquinol + O2(in) + 4 H(+)(in) = 2 a ubiquinone + 2 H2O(in) + 4 H(+)(out). The sequence is that of Cytochrome bd ubiquinol oxidase subunit 1 (cydA) from Bacillus subtilis (strain 168).